A 453-amino-acid chain; its full sequence is tRNA modification GTPase MnmE (453 aa).

Positions 23, 80, and 120 each coordinate (6S)-5-formyl-5,6,7,8-tetrahydrofolate. Positions 216–375 (GSKIVIIGKP…LIKYLKDLNC (160 aa)) constitute a TrmE-type G domain. Asn226 lines the K(+) pocket. GTP contacts are provided by residues 226-231 (NSGKSS), 245-251 (TSIEGTT), and 270-273 (DTAG). Ser230 is a binding site for Mg(2+). Residues Thr245, Ile247, and Thr250 each coordinate K(+). Thr251 serves as a coordination point for Mg(2+). (6S)-5-formyl-5,6,7,8-tetrahydrofolate is bound at residue Lys453.

This sequence belongs to the TRAFAC class TrmE-Era-EngA-EngB-Septin-like GTPase superfamily. TrmE GTPase family. In terms of assembly, homodimer. Heterotetramer of two MnmE and two MnmG subunits. K(+) is required as a cofactor.

Its subcellular location is the cytoplasm. Functionally, exhibits a very high intrinsic GTPase hydrolysis rate. Involved in the addition of a carboxymethylaminomethyl (cmnm) group at the wobble position (U34) of certain tRNAs, forming tRNA-cmnm(5)s(2)U34. The polypeptide is tRNA modification GTPase MnmE (Wigglesworthia glossinidia brevipalpis).